We begin with the raw amino-acid sequence, 293 residues long: tRNA pseudouridine synthase B (293 aa).

The active-site Nucleophile is aspartate 39.

It belongs to the pseudouridine synthase TruB family. Type 1 subfamily.

The catalysed reaction is uridine(55) in tRNA = pseudouridine(55) in tRNA. In terms of biological role, responsible for synthesis of pseudouridine from uracil-55 in the psi GC loop of transfer RNAs. The polypeptide is tRNA pseudouridine synthase B (Rickettsia bellii (strain RML369-C)).